The sequence spans 113 residues: Ranasmurfin (113 aa).

Tyrosine 2 bears the 2',4',5'-topaquinone mark. A cross-link (lysine tyrosylquinone (Tyr-Lys)) is located at residues tyrosine 2–lysine 31. 3 disulfide bridges follow: cysteine 4-cysteine 62, cysteine 17-cysteine 65, and cysteine 37-cysteine 101. An Aminomalonic acid (Ser); in chain B modification is found at serine 9. Positions cysteine 17–cysteine 65 form a cross-link, S-cysteinyl 3-(oxidosulfanyl)alanine (Cys-Cys); in chain B. The lysine tyrosylquinone (Lys-Tyr) cross-link spans lysine 30–tyrosine 108. Cysteine 65 carries the cysteine sulfenic acid (-SOH); in chain B modification. Position 108 is a 2',4',5'-topaquinone (tyrosine 108). Positions 108 and 112 each coordinate Zn(2+). A 5'-tyrosyl-5'-aminotyrosine (Tyr-Tyr) (interchain with Y-108) cross-link involves residue tyrosine 108.

Homodimer. The two chains, designated A and B, differ in their modifications, but not, it is thought, in their sequence. Zn(2+) serves as cofactor. Foam nest.

The protein resides in the secreted. This chain is Ranasmurfin, found in Polypedates leucomystax (Common tree frog).